The sequence spans 172 residues: NADH-ubiquinone oxidoreductase chain 6 (172 aa).

5 consecutive transmembrane segments (helical) span residues 1–21 (MTNY…GLAL), 26–48 (IYGG…GFGG), 52–74 (GLMV…TAMA), 86–106 (WFIF…FYLF), and 147–167 (CATW…FIII).

It belongs to the complex I subunit 6 family. As to quaternary structure, core subunit of respiratory chain NADH dehydrogenase (Complex I) which is composed of 45 different subunits.

The protein localises to the mitochondrion inner membrane. It catalyses the reaction a ubiquinone + NADH + 5 H(+)(in) = a ubiquinol + NAD(+) + 4 H(+)(out). In terms of biological role, core subunit of the mitochondrial membrane respiratory chain NADH dehydrogenase (Complex I) which catalyzes electron transfer from NADH through the respiratory chain, using ubiquinone as an electron acceptor. Essential for the catalytic activity and assembly of complex I. This Rattus norvegicus (Rat) protein is NADH-ubiquinone oxidoreductase chain 6.